We begin with the raw amino-acid sequence, 150 residues long: Putative FAD-linked sulfhydryl oxidase 088R (150 aa).

Positions 24–128 (GPFGPSGFGP…VTLQKAICIY (105 aa)) constitute an ERV/ALR sulfhydryl oxidase domain. An intrachain disulfide couples Cys-74 to Cys-77.

The cofactor is FAD.

It carries out the reaction 2 R'C(R)SH + O2 = R'C(R)S-S(R)CR' + H2O2. In terms of biological role, FAD-dependent sulfhydryl oxidase that catalyzes disulfide bond formation. The polypeptide is Putative FAD-linked sulfhydryl oxidase 088R (Dryophytes versicolor (chameleon treefrog)).